We begin with the raw amino-acid sequence, 460 residues long: Probable carboxylesterase 11 (460 aa).

Polar residues-rich tracts occupy residues 26-35 (QSSGDESSSD) and 132-145 (NSYG…SPEA). Disordered regions lie at residues 26–52 (QSSG…APNP) and 132–161 (NSYG…SSGG). An Involved in the stabilization of the negatively charged intermediate by the formation of the oxyanion hole motif is present at residues 173–175 (HGG). Catalysis depends on residues serine 289, aspartate 392, and histidine 422.

Belongs to the 'GDXG' lipolytic enzyme family. As to expression, expressed in roots, leaves, stems, flowers and siliques.

The catalysed reaction is a carboxylic ester + H2O = an alcohol + a carboxylate + H(+). In terms of biological role, carboxylesterase acting on esters with varying acyl chain length. The protein is Probable carboxylesterase 11 (CXE11) of Arabidopsis thaliana (Mouse-ear cress).